The chain runs to 483 residues: Probable glycine dehydrogenase (decarboxylating) subunit 2 (483 aa).

Position 264 is an N6-(pyridoxal phosphate)lysine (Lys-264).

Belongs to the GcvP family. C-terminal subunit subfamily. The glycine cleavage system is composed of four proteins: P, T, L and H. In this organism, the P 'protein' is a heterodimer of two subunits. Pyridoxal 5'-phosphate is required as a cofactor.

It carries out the reaction N(6)-[(R)-lipoyl]-L-lysyl-[glycine-cleavage complex H protein] + glycine + H(+) = N(6)-[(R)-S(8)-aminomethyldihydrolipoyl]-L-lysyl-[glycine-cleavage complex H protein] + CO2. Functionally, the glycine cleavage system catalyzes the degradation of glycine. The P protein binds the alpha-amino group of glycine through its pyridoxal phosphate cofactor; CO(2) is released and the remaining methylamine moiety is then transferred to the lipoamide cofactor of the H protein. The chain is Probable glycine dehydrogenase (decarboxylating) subunit 2 from Nitrosomonas eutropha (strain DSM 101675 / C91 / Nm57).